The chain runs to 835 residues: Prickle-like protein 1-A (835 aa).

The 109-residue stretch at phenylalanine 14–methionine 122 folds into the PET domain. LIM zinc-binding domains are found at residues alanine 124 to lysine 188, proline 189 to glutamate 249, and tyrosine 250 to histidine 313. Disordered regions lie at residues valine 312–cysteine 346, leucine 426–asparagine 455, cysteine 603–serine 706, and cysteine 769–serine 835. 3 stretches are compositionally biased toward basic and acidic residues: residues glutamate 432–arginine 453, cysteine 603–methionine 614, and glutamate 646–arginine 655. Basic residues-rich tracts occupy residues arginine 669–lysine 683 and serine 819–serine 835. Cysteine 832 is modified (cysteine methyl ester). Cysteine 832 carries S-farnesyl cysteine lipidation. A propeptide spans isoleucine 833 to serine 835 (removed in mature form).

Belongs to the prickle / espinas / testin family. In terms of assembly, interacts with dvl2/dsh and mapk8/jnk1. Expressed in the dorsal marginal zone of early gastrulae (stage 10). As gastrulation proceeds, expression expands to include the lateral and ventral marginal zones, excluding the few rows of cells above the blastopore lip. Expression moves dorsally with gastrulation cell movements, and by the end of gastrulation expression is seen in dorsal mesoderm and posterior but not anterior neural ectoderm. Expression becomes down-regulated in mesoderm but remains strong in posterior ectoderm through the neurula stages. During tailbud stages, expressed in the pronephric duct, tailbud, tailtip and forming somites. In the most posterior regions, expressed in notochord and in the floorplate of the neural tube with weak expression in the roofplate. At stage 30, expressed in a complex pattern in the head including strong expression in the lens and otic vesicle.

The protein resides in the cell membrane. Its function is as follows. Acts in a planar cell polarity (PCP) complex; polarization along the apical/basal axis of epithelial cells. Regulates the polarized assembly of fibronectrin on the surface of the mesoderm during gastrulation. Essential for gastrulation cell movements, cooperating with dvl2/dsh to activate jnk. Acts together with tes to control axial elongation. This chain is Prickle-like protein 1-A (prickle1-a), found in Xenopus laevis (African clawed frog).